Here is a 637-residue protein sequence, read N- to C-terminus: Mitochondrial Rho GTPase 1 (637 aa).

Topologically, residues methionine 1 to serine 613 are cytoplasmic. In terms of domain architecture, Miro 1 spans leucine 7–tyrosine 184. Residues serine 28 to valine 35, isoleucine 74 to arginine 78, and leucine 135 to glycine 138 each bind GTP. 2 EF-hand domains span residues arginine 200–isoleucine 235 and glutamate 320–proline 355. The Ca(2+) site is built by aspartate 213, aspartate 215, aspartate 217, tyrosine 219, glutamate 224, aspartate 333, aspartate 335, aspartate 337, cysteine 339, and glutamate 344. Residues arginine 436 to tyrosine 601 enclose the Miro 2 domain. GTP contacts are provided by residues glycine 445–threonine 452, lysine 482–glutamate 486, and threonine 549–glutamate 552. Residues asparagine 614–leucine 634 form a helical; Anchor for type IV membrane protein membrane-spanning segment. Residues lysine 635–leucine 637 are Mitochondrial intermembrane-facing.

The protein belongs to the mitochondrial Rho GTPase family.

The protein localises to the mitochondrion outer membrane. In terms of biological role, mitochondrial GTPase involved in mitochondrial trafficking. Probably involved in control of anterograde transport of mitochondria and their subcellular distribution. In Caenorhabditis briggsae, this protein is Mitochondrial Rho GTPase 1.